We begin with the raw amino-acid sequence, 320 residues long: 3-O-acetylpapaveroxine carboxylesterase CXE1 (320 aa).

The short motif at His-72–Gly-74 is the Involved in the stabilization of the negatively charged intermediate by the formation of the oxyanion hole element. Catalysis depends on residues Ser-158, Asp-262, and His-292.

Belongs to the 'GDXG' lipolytic enzyme family.

It carries out the reaction 3-O-acetylpapaveroxine + H2O = narcotine hemiacetal + acetate + H(+). Its pathway is alkaloid biosynthesis. Carboxylesterase involved in the biosynthesis of the benzylisoquinoline alkaloid noscapine. Converts 3-O-acetylpapaveroxine to papaveroxine which spontaneously rearranges to narcotine hemiacetal. The chain is 3-O-acetylpapaveroxine carboxylesterase CXE1 from Papaver somniferum (Opium poppy).